A 124-amino-acid polypeptide reads, in one-letter code: Large ribosomal subunit protein bL12 (124 aa).

The protein belongs to the bacterial ribosomal protein bL12 family. In terms of assembly, homodimer. Part of the ribosomal stalk of the 50S ribosomal subunit. Forms a multimeric L10(L12)X complex, where L10 forms an elongated spine to which 2 to 4 L12 dimers bind in a sequential fashion. Binds GTP-bound translation factors.

Functionally, forms part of the ribosomal stalk which helps the ribosome interact with GTP-bound translation factors. Is thus essential for accurate translation. The sequence is that of Large ribosomal subunit protein bL12 from Wolinella succinogenes (strain ATCC 29543 / DSM 1740 / CCUG 13145 / JCM 31913 / LMG 7466 / NCTC 11488 / FDC 602W) (Vibrio succinogenes).